A 346-amino-acid polypeptide reads, in one-letter code: Dihydroorotase (346 aa).

Residues histidine 17 and histidine 19 each contribute to the Zn(2+) site. Residues 19 to 21 and asparagine 45 each bind substrate; that span reads HVR. Zn(2+) contacts are provided by lysine 102, histidine 139, and histidine 177. Lysine 102 carries the N6-carboxylysine modification. Position 139 (histidine 139) interacts with substrate. Leucine 222 is a binding site for substrate. Aspartate 250 contributes to the Zn(2+) binding site. Aspartate 250 is a catalytic residue. Substrate is bound by residues histidine 254 and alanine 266.

This sequence belongs to the metallo-dependent hydrolases superfamily. DHOase family. Class II DHOase subfamily. As to quaternary structure, homodimer. The cofactor is Zn(2+).

The enzyme catalyses (S)-dihydroorotate + H2O = N-carbamoyl-L-aspartate + H(+). Its pathway is pyrimidine metabolism; UMP biosynthesis via de novo pathway; (S)-dihydroorotate from bicarbonate: step 3/3. Its function is as follows. Catalyzes the reversible cyclization of carbamoyl aspartate to dihydroorotate. In Delftia acidovorans (strain DSM 14801 / SPH-1), this protein is Dihydroorotase.